The chain runs to 407 residues: Peptidase T (407 aa).

H81 is a Zn(2+) binding site. D83 is an active-site residue. Position 142 (D142) interacts with Zn(2+). The active-site Proton acceptor is E176. Zn(2+)-binding residues include E177, D199, and H381.

This sequence belongs to the peptidase M20B family. The cofactor is Zn(2+).

Its subcellular location is the cytoplasm. The enzyme catalyses Release of the N-terminal residue from a tripeptide.. Cleaves the N-terminal amino acid of tripeptides. This Streptococcus pneumoniae (strain P1031) protein is Peptidase T.